The chain runs to 308 residues: Cysteine proteinase 3 (308 aa).

The signal sequence occupies residues 1 to 13 (MFALILFVSLACA). Positions 14–92 (NEVAFKQWAA…TSNVKAAVKA (79 aa)) are cleaved as a propeptide — activation peptide. Cystine bridges form between Cys112–Cys153 and Cys146–Cys186. Cys115 is a catalytic residue. Catalysis depends on residues His251 and Asn271.

This sequence belongs to the peptidase C1 family.

Its subcellular location is the cytoplasm. It is found in the cytoplasmic vesicle. It localises to the phagosome. It carries out the reaction Hydrolysis of proteins, including basement membrane collagen and azocasein. Preferential cleavage: Arg-Arg-|-Xaa in small molecule substrates including Z-Arg-Arg-|-NHMec.. Functionally, cysteine protease which may be involved in pathogenicity. The chain is Cysteine proteinase 3 from Entamoeba histolytica (strain ATCC 30459 / HM-1:IMSS / ABRM).